The primary structure comprises 404 residues: Argininosuccinate synthase (404 aa).

Alanine 9–serine 17 contacts ATP. Tyrosine 86 provides a ligand contact to L-citrulline. Glycine 116 is a binding site for ATP. The L-aspartate site is built by threonine 118, asparagine 122, and aspartate 123. Asparagine 122 serves as a coordination point for L-citrulline. Arginine 126, serine 174, serine 183, glutamate 259, and tyrosine 271 together coordinate L-citrulline.

Belongs to the argininosuccinate synthase family. Type 1 subfamily. In terms of assembly, homotetramer.

It is found in the cytoplasm. It carries out the reaction L-citrulline + L-aspartate + ATP = 2-(N(omega)-L-arginino)succinate + AMP + diphosphate + H(+). It participates in amino-acid biosynthesis; L-arginine biosynthesis; L-arginine from L-ornithine and carbamoyl phosphate: step 2/3. The protein is Argininosuccinate synthase of Listeria monocytogenes serovar 1/2a (strain ATCC BAA-679 / EGD-e).